The primary structure comprises 204 residues: DNA-directed RNA polymerase subunit gamma (204 aa).

Cys34, Cys36, Cys49, and Cys52 together coordinate Zn(2+).

Belongs to the RNA polymerase beta' chain family. RpoC1 subfamily. As to quaternary structure, in cyanobacteria the RNAP catalytic core is composed of 2 alpha, 1 beta, 1 beta', 1 gamma and 1 omega subunit. When a sigma factor is associated with the core the holoenzyme is formed, which can initiate transcription. Zn(2+) serves as cofactor.

The catalysed reaction is RNA(n) + a ribonucleoside 5'-triphosphate = RNA(n+1) + diphosphate. In terms of biological role, DNA-dependent RNA polymerase catalyzes the transcription of DNA into RNA using the four ribonucleoside triphosphates as substrates. The chain is DNA-directed RNA polymerase subunit gamma (rpoC1) from Synechococcus sp. (strain WH8103).